The chain runs to 128 residues: Iron-sulfur cluster insertion protein ErpA (128 aa).

Cys-56, Cys-120, and Cys-122 together coordinate iron-sulfur cluster.

It belongs to the HesB/IscA family. In terms of assembly, homodimer. The cofactor is iron-sulfur cluster.

In terms of biological role, required for insertion of 4Fe-4S clusters for at least IspG. This chain is Iron-sulfur cluster insertion protein ErpA, found in Xanthomonas campestris pv. campestris (strain 8004).